We begin with the raw amino-acid sequence, 349 residues long: 3-isopropylmalate dehydrogenase (349 aa).

Substrate-binding residues include Arg-91, Arg-101, Arg-129, and Asp-219. Mg(2+)-binding residues include Asp-219, Asp-243, and Asp-247. 277–289 (GSAPDIAGLGKAN) is a binding site for NAD(+).

This sequence belongs to the isocitrate and isopropylmalate dehydrogenases family. LeuB type 1 subfamily. As to quaternary structure, homodimer. Mg(2+) serves as cofactor. The cofactor is Mn(2+).

It is found in the cytoplasm. The enzyme catalyses (2R,3S)-3-isopropylmalate + NAD(+) = 4-methyl-2-oxopentanoate + CO2 + NADH. Its pathway is amino-acid biosynthesis; L-leucine biosynthesis; L-leucine from 3-methyl-2-oxobutanoate: step 3/4. Its function is as follows. Catalyzes the oxidation of 3-carboxy-2-hydroxy-4-methylpentanoate (3-isopropylmalate) to 3-carboxy-4-methyl-2-oxopentanoate. The product decarboxylates to 4-methyl-2 oxopentanoate. The sequence is that of 3-isopropylmalate dehydrogenase from Zymomonas mobilis subsp. mobilis (strain ATCC 31821 / ZM4 / CP4).